Consider the following 921-residue polypeptide: Inner nuclear membrane protein Man1 (921 aa).

The 45-residue stretch at 7 to 51 folds into the LEM domain; it reads AAAPQQLSDEELFSQLRRYGLSPGPVTESTRPVYLKKLKKLREEE. Residue Ser-28 is modified to Phosphoserine. Disordered stretches follow at residues 47–97, 136–357, and 374–395; these read LREE…AYLR, SSDE…GGCG, and LAPL…PTGP. Low complexity-rich tracts occupy residues 53 to 62 and 72 to 85; these read QQQQQQQQQQ and TRNS…TAMG. Phosphoserine is present on residues Ser-136, Ser-137, and Ser-140. Positions 217–237 are enriched in acidic residues; the sequence is AAEDADEELADGEDRDPEAEE. A phosphoserine mark is found at Ser-261, Ser-263, and Ser-287. The span at 263–275 shows a compositional bias: acidic residues; that stretch reads SEEEEEEGEEDGD. The segment covering 308–317 has biased composition (polar residues); that stretch reads SGGSRQETSV. Residues 348-357 show a composition bias toward gly residues; sequence PGGGGGGGCG. Ser-412 carries the post-translational modification Phosphoserine. The next 2 membrane-spanning stretches (helical) occupy residues 486 to 506 and 637 to 657; these read MFLL…YLGM and AFIT…LVCV. The segment at 709-921 is interaction with SMAD1, SMAD2, SMAD3 and SMAD5; that stretch reads VRDSLIQPQD…TGLANSQGSS (213 aa). Residues 717-736 mediate DNA binding; the sequence is QDRKKMKKVWDRAVDFLAAN. Ser-787 is subject to Phosphoserine. Thr-893 is modified (phosphothreonine). A Phosphoserine modification is found at Ser-921.

Interacts with SMAD1, SMAD2, SMAD3 and SMAD5. Binds to both phosphorylated and unphosphorylated R-SMADS.

It is found in the nucleus inner membrane. Its function is as follows. Can function as a specific repressor of TGF-beta, activin, and BMP signaling through its interaction with the R-SMAD proteins. Antagonizes TGF-beta-induced cell proliferation arrest. In Mus musculus (Mouse), this protein is Inner nuclear membrane protein Man1 (Lemd3).